The primary structure comprises 334 residues: Protein-methionine-sulfoxide reductase catalytic subunit MsrP (334 aa).

The segment at residues 1-44 is a signal peptide (tat-type signal); that stretch reads MKKNQFLKESDVTAESVFFMKRRQVLKALGISAAALSLPHAAHA. Mo-molybdopterin is bound by residues N88, 91-92, C146, T181, N233, R238, and 249-251; these read YE and GIK.

Belongs to the MsrP family. In terms of assembly, heterodimer of a catalytic subunit (MsrP) and a heme-binding subunit (MsrQ). Mo-molybdopterin serves as cofactor. Predicted to be exported by the Tat system. The position of the signal peptide cleavage has not been experimentally proven.

The protein localises to the periplasm. The catalysed reaction is L-methionyl-[protein] + a quinone + H2O = L-methionyl-(S)-S-oxide-[protein] + a quinol. It carries out the reaction L-methionyl-[protein] + a quinone + H2O = L-methionyl-(R)-S-oxide-[protein] + a quinol. Functionally, part of the MsrPQ system that repairs oxidized periplasmic proteins containing methionine sulfoxide residues (Met-O), using respiratory chain electrons. Thus protects these proteins from oxidative-stress damage caused by reactive species of oxygen and chlorine generated by the host defense mechanisms. MsrPQ is essential for the maintenance of envelope integrity under bleach stress, rescuing a wide series of structurally unrelated periplasmic proteins from methionine oxidation, including the primary periplasmic chaperone SurA and the lipoprotein Pal. The catalytic subunit MsrP is non-stereospecific, being able to reduce both (R-) and (S-) diastereoisomers of methionine sulfoxide. The protein is Protein-methionine-sulfoxide reductase catalytic subunit MsrP of Escherichia coli O9:H4 (strain HS).